The following is a 95-amino-acid chain: Co-chaperonin GroES (95 aa).

The protein belongs to the GroES chaperonin family. Heptamer of 7 subunits arranged in a ring. Interacts with the chaperonin GroEL.

It localises to the cytoplasm. Together with the chaperonin GroEL, plays an essential role in assisting protein folding. The GroEL-GroES system forms a nano-cage that allows encapsulation of the non-native substrate proteins and provides a physical environment optimized to promote and accelerate protein folding. GroES binds to the apical surface of the GroEL ring, thereby capping the opening of the GroEL channel. The sequence is that of Co-chaperonin GroES from Oleidesulfovibrio alaskensis (strain ATCC BAA-1058 / DSM 17464 / G20) (Desulfovibrio alaskensis).